A 934-amino-acid polypeptide reads, in one-letter code: Leucine--tRNA ligase 1 (934 aa).

The 'HIGH' region motif lies at 41–51 (PYTNSPMHVGH). The 'KMSKS' region motif lies at 616–620 (KMSKS). Position 619 (lysine 619) interacts with ATP.

It belongs to the class-I aminoacyl-tRNA synthetase family.

It localises to the cytoplasm. It catalyses the reaction tRNA(Leu) + L-leucine + ATP = L-leucyl-tRNA(Leu) + AMP + diphosphate. The sequence is that of Leucine--tRNA ligase 1 from Saccharolobus solfataricus (strain ATCC 35092 / DSM 1617 / JCM 11322 / P2) (Sulfolobus solfataricus).